The chain runs to 138 residues: Ribosome maturation factor RimP (138 aa).

It belongs to the RimP family.

It is found in the cytoplasm. Functionally, required for maturation of 30S ribosomal subunits. This Campylobacter concisus (strain 13826) protein is Ribosome maturation factor RimP.